Here is a 694-residue protein sequence, read N- to C-terminus: Polyribonucleotide nucleotidyltransferase (694 aa).

Mg(2+) contacts are provided by Asp-485 and Asp-491. The region spanning 552 to 611 (PRIETMQIKPNKIATVIGPGGKQIRQIIEEAGVQIDINDSGLVSISASSPQAIEKAKSMI) is the KH domain. Positions 621 to 689 (GKIYEGRVTS…EKGQYKLSHK (69 aa)) constitute an S1 motif domain.

This sequence belongs to the polyribonucleotide nucleotidyltransferase family. Mg(2+) is required as a cofactor.

The protein localises to the cytoplasm. It carries out the reaction RNA(n+1) + phosphate = RNA(n) + a ribonucleoside 5'-diphosphate. Involved in mRNA degradation. Catalyzes the phosphorolysis of single-stranded polyribonucleotides processively in the 3'- to 5'-direction. In Chlamydia caviae (strain ATCC VR-813 / DSM 19441 / 03DC25 / GPIC) (Chlamydophila caviae), this protein is Polyribonucleotide nucleotidyltransferase.